The primary structure comprises 213 residues: Urease accessory protein UreG (213 aa).

GTP is bound at residue 10-17 (GPVGSGKT).

It belongs to the SIMIBI class G3E GTPase family. UreG subfamily. In terms of assembly, homodimer. UreD, UreF and UreG form a complex that acts as a GTP-hydrolysis-dependent molecular chaperone, activating the urease apoprotein by helping to assemble the nickel containing metallocenter of UreC. The UreE protein probably delivers the nickel.

It is found in the cytoplasm. Functionally, facilitates the functional incorporation of the urease nickel metallocenter. This process requires GTP hydrolysis, probably effectuated by UreG. The polypeptide is Urease accessory protein UreG (Deinococcus radiodurans (strain ATCC 13939 / DSM 20539 / JCM 16871 / CCUG 27074 / LMG 4051 / NBRC 15346 / NCIMB 9279 / VKM B-1422 / R1)).